The following is a 739-amino-acid chain: Nuclear pore complex protein NUP62 (739 aa).

19 consecutive repeat copies span residues 6-7, 17-18, 50-51, 52-53, 68-69, 70-71, 78-79, 80-81, 91-92, 93-94, 108-109, 110-111, 124-125, 141-142, 159-160, 174-175, 186-187, 207-208, and 221-222. Residues 6 to 450 form a 26 X 2 AA repeats of F-G region; the sequence is FGQSNSVGGF…AATFSTTGFG (445 aa). Residues 18 to 67 form a disordered region; sequence GSSSATNSSSASSTTSPLSFSFNQSSNPSSTGFGFGSSVSSTPASSTTPS. A compositionally biased stretch (low complexity) spans 79–218; that stretch reads GFGSSASSST…ASSSAATSTS (140 aa). Residues 79–245 are disordered; sequence GFGSSASSST…VASSAPGSSS (167 aa). A compositionally biased stretch (low complexity) spans 232-245; it reads PSFSVASSAPGSSS. 5 tandem repeats follow at residues 248–249, 271–272, 280–281, 308–309, and 366–367. 3 disordered regions span residues 281–329, 341–366, and 399–418; these read GSSS…ASPF, TASS…SFSF, and TTTS…SAPA. Repeat copies occupy residues 426–427 and 449–450. The tract at residues 471–533 is disordered; that stretch reads KTSTPASSSQ…AVAPVAGSPK (63 aa). Positions 472-519 are enriched in low complexity; that stretch reads TSTPASSSQPQTTSPAFSFSLPSSTSTTAPATSSATTTQTTLVVPSSS. A coiled-coil region spans residues 584 to 674; it reads RLEIEVAKVV…IRSIIQSVNA (91 aa).

This sequence belongs to the nucleoporin NSP1/NUP62 family. As to quaternary structure, part of the nuclear pore complex (NPC). The NPC has an eight-fold symmetrical structure comprising a central transport channel and two rings, the cytoplasmic and nuclear rings, to which eight filaments are attached. The cytoplasmic filaments have loose ends, while the nuclear filaments are joined in a distal ring, forming a nuclear basket. NPCs are highly dynamic in configuration and composition, and can be devided in 3 subcomplexes, the NUP62 subcomplex, the NUP107-160 subcomplex and the NUP93 subcomplex, containing approximately 30 different nucleoporin proteins. Interacts with NUP58 and the importin KPNB1.

It is found in the nucleus envelope. The protein localises to the nucleus. It localises to the nuclear pore complex. This Arabidopsis thaliana (Mouse-ear cress) protein is Nuclear pore complex protein NUP62.